A 157-amino-acid polypeptide reads, in one-letter code: Crossover junction endodeoxyribonuclease RuvC (157 aa).

Active-site residues include aspartate 7, glutamate 67, and aspartate 140. 3 residues coordinate Mg(2+): aspartate 7, glutamate 67, and aspartate 140.

This sequence belongs to the RuvC family. In terms of assembly, homodimer which binds Holliday junction (HJ) DNA. The HJ becomes 2-fold symmetrical on binding to RuvC with unstacked arms; it has a different conformation from HJ DNA in complex with RuvA. In the full resolvosome a probable DNA-RuvA(4)-RuvB(12)-RuvC(2) complex forms which resolves the HJ. The cofactor is Mg(2+).

The protein localises to the cytoplasm. The catalysed reaction is Endonucleolytic cleavage at a junction such as a reciprocal single-stranded crossover between two homologous DNA duplexes (Holliday junction).. Its function is as follows. The RuvA-RuvB-RuvC complex processes Holliday junction (HJ) DNA during genetic recombination and DNA repair. Endonuclease that resolves HJ intermediates. Cleaves cruciform DNA by making single-stranded nicks across the HJ at symmetrical positions within the homologous arms, yielding a 5'-phosphate and a 3'-hydroxyl group; requires a central core of homology in the junction. The consensus cleavage sequence is 5'-(A/T)TT(C/G)-3'. Cleavage occurs on the 3'-side of the TT dinucleotide at the point of strand exchange. HJ branch migration catalyzed by RuvA-RuvB allows RuvC to scan DNA until it finds its consensus sequence, where it cleaves and resolves the cruciform DNA. In Rickettsia bellii (strain RML369-C), this protein is Crossover junction endodeoxyribonuclease RuvC.